Reading from the N-terminus, the 422-residue chain is Succinate--CoA ligase [ADP-forming] subunit beta, mitochondrial (422 aa).

The N-terminal 27 residues, 1 to 27 (MVRGSLGKLASRALSVAGKWQHQQLRR), are a transit peptide targeting the mitochondrion. The 244-residue stretch at 36–279 (AELMGKYGIN…TTQEDPREVA (244 aa)) folds into the ATP-grasp domain. ATP is bound by residues K75, 82–84 (GRG), and E142. Residues N234 and D248 each contribute to the Mg(2+) site. Substrate is bound by residues N299 and 356 to 358 (GIM).

This sequence belongs to the succinate/malate CoA ligase beta subunit family. As to quaternary structure, heterodimer of an alpha and a beta subunit. Mg(2+) is required as a cofactor.

The protein localises to the mitochondrion. It carries out the reaction succinate + ATP + CoA = succinyl-CoA + ADP + phosphate. It functions in the pathway carbohydrate metabolism; tricarboxylic acid cycle; succinate from succinyl-CoA (ligase route): step 1/1. In terms of biological role, succinyl-CoA synthetase functions in the citric acid cycle (TCA), coupling the hydrolysis of succinyl-CoA to the synthesis of ATP and thus represents the only step of substrate-level phosphorylation in the TCA. The beta subunit provides nucleotide specificity of the enzyme and binds the substrate succinate, while the binding sites for coenzyme A and phosphate are found in the alpha subunit. This Oryza sativa subsp. japonica (Rice) protein is Succinate--CoA ligase [ADP-forming] subunit beta, mitochondrial.